Reading from the N-terminus, the 664-residue chain is Probable urea active transporter 1 (664 aa).

16 helical membrane-spanning segments follow: residues 9 to 29 (SVGYGIVVGLGLGFAALMIFV), 56 to 76 (GLVASAVVSSWTWASTLLTSA), 86 to 106 (GAFWYASGACVQILLFTVLAI), 132 to 152 (GVFLVFAYITNILVMAMLLCG), 165 to 185 (TVAVCFLLPVGVIIYTMFGGI), 189 to 209 (FLTDYIHTVIILVILIMFSLA), 252 to 272 (GAIFFIINLAGNFGTVFVDNG), 290 to 310 (ILGGLAWFAIPWLAATTMGLV), 327 to 347 (MSDLEVSEGLVLPYAAIALMG), 353 to 373 (ATLLLVFMAVTSAASAELIAV), 395 to 415 (LLYTGHASLIVFGFAMSGFAT), 428 to 448 (YLLMGVLVCPAVVPATCVMLF), 454 to 474 (IAVTVSPVLGIISSIITWLVV), 496 to 516 (AGNVVGLLSPALYILILSIIF), 555 to 575 (VAALIITAAFIILWPWPMYGT), and 587 to 607 (WVVVGLIWIFFTVFAVGIFPL).

This sequence belongs to the sodium:solute symporter (SSF) (TC 2.A.21) family.

The protein localises to the membrane. Its function is as follows. Involved in active transport of urea. This Schizosaccharomyces pombe (strain 972 / ATCC 24843) (Fission yeast) protein is Probable urea active transporter 1 (dur3-1).